A 352-amino-acid polypeptide reads, in one-letter code: MEGISIYTSDNYTEEMGSGDYDSMKEPCFREENANFNKIFLPTIYSIIFLTGIVGNGLVILVMGYQKKLRSMTDKYRLHLSVADLLFVITLPFWAVDAVANWYFGNFLCKAVHVIYTVNLYSSVLILAFISLDRYLAIVHATNSQRPRKLLAEKVVYVGVWIPALLLTIPDFIFANVSEADDRYICDRFYPNDLWVVVFQFQHIMVGLILPGIVILSCYCIIISKLSHSKGHQKRKALKTTVILILAFFACWLPYYIGISIDSFILLEIIKQGCEFENTVHKWISITEALAFFHCCLNPILYAFLGAKFKTSAQHALTSVSRGSSLKILSKGKRGGHSSVSTESESSSFHSS.

The interval 1 to 21 is important for chemokine binding and signaling; it reads MEGISIYTSDNYTEEMGSGDY. Residues 1–38 are Extracellular-facing; it reads MEGISIYTSDNYTEEMGSGDYDSMKEPCFREENANFNK. Position 7 is a sulfotyrosine (tyrosine 7). Asparagine 11 carries N-linked (GlcNAc...) asparagine glycosylation. Tyrosine 12 bears the Sulfotyrosine mark. O-linked (Xyl...) (chondroitin sulfate) serine glycosylation occurs at serine 18. A Sulfotyrosine modification is found at tyrosine 21. 2 disulfide bridges follow: cysteine 28-cysteine 274 and cysteine 109-cysteine 186. The helical transmembrane segment at 39 to 63 threads the bilayer; it reads IFLPTIYSIIFLTGIVGNGLVILVM. At 64–77 the chain is on the cytoplasmic side; sequence GYQKKLRSMTDKYR. A helical membrane pass occupies residues 78-99; it reads LHLSVADLLFVITLPFWAVDAV. The segment at 94 to 97 is chemokine binding; the sequence is WAVD. Residues 100–110 are Extracellular-facing; it reads ANWYFGNFLCK. A helical transmembrane segment spans residues 111–130; the sequence is AVHVIYTVNLYSSVLILAFI. The tract at residues 113 to 117 is chemokine binding; that stretch reads HVIYT. The Cytoplasmic segment spans residues 131–154; that stretch reads SLDRYLAIVHATNSQRPRKLLAEK. The Important for signaling signature appears at 133–135; it reads DRY. The tract at residues 135–147 is involved in dimerization; when bound to chemokine; that stretch reads YLAIVHATNSQRP. A helical membrane pass occupies residues 155–174; sequence VVYVGVWIPALLLTIPDFIF. At 175–195 the chain is on the extracellular side; it reads ANVSEADDRYICDRFYPNDLW. Residues 186–190 form a chemokine binding, important for signaling region; the sequence is CDRFY. Residues 191–210 are involved in dimerization; sequence PNDLWVVVFQFQHIMVGLIL. A helical membrane pass occupies residues 196-216; sequence VVVFQFQHIMVGLILPGIVIL. The Cytoplasmic segment spans residues 217–241; it reads SCYCIIISKLSHSKGHQKRKALKTT. Residues 242 to 261 form a helical membrane-spanning segment; the sequence is VILILAFFACWLPYYIGISI. Residues 262–282 lie on the Extracellular side of the membrane; that stretch reads DSFILLEIIKQGCEFENTVHK. Positions 266–268 are involved in dimerization; that stretch reads LLE. The helical transmembrane segment at 283-302 threads the bilayer; that stretch reads WISITEALAFFHCCLNPILY. Residues 303–352 lie on the Cytoplasmic side of the membrane; sequence AFLGAKFKTSAQHALTSVSRGSSLKILSKGKRGGHSSVSTESESSSFHSS. Serine 319 and serine 321 each carry phosphoserine. 2 positions are modified to phosphoserine; by PKC and GRK6: serine 324 and serine 325. Residues 329 to 352 are disordered; sequence LSKGKRGGHSSVSTESESSSFHSS. Serine 330 is subject to Phosphoserine; by GRK6. A Glycyl lysine isopeptide (Lys-Gly) (interchain with G-Cter in ubiquitin) cross-link involves residue lysine 331. Low complexity predominate over residues 337 to 352; sequence HSSVSTESESSSFHSS. Serine 339 carries the post-translational modification Phosphoserine; by GRK6. Phosphoserine is present on residues serine 348 and serine 351.

It belongs to the G-protein coupled receptor 1 family. Monomer. Can form homodimers. Interacts with CD164. Interacts with ARRB2; the interaction is dependent on the C-terminal phosphorylation of CXCR4 and allows activation of MAPK1 and MAPK3. Interacts with ARR3; the interaction is dependent on the C-terminal phosphorylation of CXCR4 and modulates calcium mobilization. Interacts with RNF113A; the interaction, enhanced by CXCL12, promotes CXCR4 ubiquitination and subsequent degradation. Interacts (via the cytoplasmic C-terminal) with ITCH (via the WW domains I and II); the interaction, enhanced by CXCL12, promotes CXCR4 ubiquitination and leads to its degradation. Interacts with extracellular ubiquitin. Interacts with DBN1; this interaction is enhanced by antigenic stimulation. Following LPS binding, may form a complex with GDF5, HSP90AA1 and HSPA8. In terms of processing, phosphorylated on agonist stimulation. Rapidly phosphorylated on serine and threonine residues in the C-terminal. Phosphorylation at Ser-324 and Ser-325 leads to recruitment of ITCH, ubiquitination and protein degradation. Ubiquitinated after ligand binding, leading to its degradation. Ubiquitinated by ITCH at the cell membrane on agonist stimulation. The ubiquitin-dependent mechanism, endosomal sorting complex required for transport (ESCRT), then targets CXCR4 for lysosomal degradation. This process is dependent also on prior Ser-/Thr-phosphorylation in the C-terminal of CXCR4. Also binding of ARRB1 to STAM negatively regulates CXCR4 sorting to lysosomes though modulating ubiquitination of SFR5S. Post-translationally, sulfation is required for efficient binding of CXCL12/SDF-1alpha and promotes its dimerization. In terms of processing, O- and N-glycosylated. N-glycosylation can mask coreceptor function. The O-glycosylation chondroitin sulfate attachment does not affect interaction with CXCL12/SDF-1alpha nor its coreceptor activity.

The protein resides in the cell membrane. Its subcellular location is the cell junction. The protein localises to the early endosome. It is found in the late endosome. It localises to the lysosome. Receptor for the C-X-C chemokine CXCL12/SDF-1 that transduces a signal by increasing intracellular calcium ion levels and enhancing MAPK1/MAPK3 activation. Involved in the AKT signaling cascade. Plays a role in regulation of cell migration, e.g. during wound healing. Acts as a receptor for extracellular ubiquitin; leading to enhanced intracellular calcium ions and reduced cellular cAMP levels. Binds bacterial lipopolysaccharide (LPS) et mediates LPS-induced inflammatory response, including TNF secretion by monocytes. Involved in hematopoiesis and in cardiac ventricular septum formation. Also plays an essential role in vascularization of the gastrointestinal tract, probably by regulating vascular branching and/or remodeling processes in endothelial cells. Involved in cerebellar development. In the CNS, could mediate hippocampal-neuron survival. The sequence is that of C-X-C chemokine receptor type 4 (CXCR4) from Pan troglodytes (Chimpanzee).